The primary structure comprises 323 residues: tRNA U34 carboxymethyltransferase (323 aa).

Carboxy-S-adenosyl-L-methionine-binding positions include K91, W105, K110, G130, 152–154, 181–182, M196, Y200, and R315; these read DPT and IE.

This sequence belongs to the class I-like SAM-binding methyltransferase superfamily. CmoB family. In terms of assembly, homotetramer.

The catalysed reaction is carboxy-S-adenosyl-L-methionine + 5-hydroxyuridine(34) in tRNA = 5-carboxymethoxyuridine(34) in tRNA + S-adenosyl-L-homocysteine + H(+). Catalyzes carboxymethyl transfer from carboxy-S-adenosyl-L-methionine (Cx-SAM) to 5-hydroxyuridine (ho5U) to form 5-carboxymethoxyuridine (cmo5U) at position 34 in tRNAs. In Salmonella enteritidis PT4 (strain P125109), this protein is tRNA U34 carboxymethyltransferase.